Reading from the N-terminus, the 95-residue chain is Aspartyl/glutamyl-tRNA(Asn/Gln) amidotransferase subunit C (95 aa).

Belongs to the GatC family. As to quaternary structure, heterotrimer of A, B and C subunits.

The enzyme catalyses L-glutamyl-tRNA(Gln) + L-glutamine + ATP + H2O = L-glutaminyl-tRNA(Gln) + L-glutamate + ADP + phosphate + H(+). It catalyses the reaction L-aspartyl-tRNA(Asn) + L-glutamine + ATP + H2O = L-asparaginyl-tRNA(Asn) + L-glutamate + ADP + phosphate + 2 H(+). Functionally, allows the formation of correctly charged Asn-tRNA(Asn) or Gln-tRNA(Gln) through the transamidation of misacylated Asp-tRNA(Asn) or Glu-tRNA(Gln) in organisms which lack either or both of asparaginyl-tRNA or glutaminyl-tRNA synthetases. The reaction takes place in the presence of glutamine and ATP through an activated phospho-Asp-tRNA(Asn) or phospho-Glu-tRNA(Gln). The polypeptide is Aspartyl/glutamyl-tRNA(Asn/Gln) amidotransferase subunit C (Clostridium botulinum (strain 657 / Type Ba4)).